The following is a 216-amino-acid chain: Probable GTP-binding protein EngB (216 aa).

The EngB-type G domain occupies G27–A201. GTP is bound by residues G35–S42, G62–L66, D80–G83, T147–D150, and F180–S182. Residues S42 and T64 each coordinate Mg(2+).

The protein belongs to the TRAFAC class TrmE-Era-EngA-EngB-Septin-like GTPase superfamily. EngB GTPase family. The cofactor is Mg(2+).

In terms of biological role, necessary for normal cell division and for the maintenance of normal septation. The protein is Probable GTP-binding protein EngB of Aeromonas hydrophila subsp. hydrophila (strain ATCC 7966 / DSM 30187 / BCRC 13018 / CCUG 14551 / JCM 1027 / KCTC 2358 / NCIMB 9240 / NCTC 8049).